Consider the following 69-residue polypeptide: Large ribosomal subunit protein bL28 (69 aa).

This sequence belongs to the bacterial ribosomal protein bL28 family.

The chain is Large ribosomal subunit protein bL28 from Lawsonia intracellularis (strain PHE/MN1-00).